The following is a 209-amino-acid chain: GTP cyclohydrolase 1 (209 aa).

3 residues coordinate Zn(2+): C89, H92, and C163.

The protein belongs to the GTP cyclohydrolase I family. In terms of assembly, toroid-shaped homodecamer, composed of two pentamers of five dimers.

It carries out the reaction GTP + H2O = 7,8-dihydroneopterin 3'-triphosphate + formate + H(+). It functions in the pathway cofactor biosynthesis; 7,8-dihydroneopterin triphosphate biosynthesis; 7,8-dihydroneopterin triphosphate from GTP: step 1/1. This Sulfolobus acidocaldarius (strain ATCC 33909 / DSM 639 / JCM 8929 / NBRC 15157 / NCIMB 11770) protein is GTP cyclohydrolase 1.